The sequence spans 34 residues: Photosystem I reaction center subunit XII (34 aa).

Residues 9-29 traverse the membrane as a helical segment; sequence LIILGLIVVMHAGVLALRLGI.

This sequence belongs to the PsaM family.

Its subcellular location is the cellular thylakoid membrane. This chain is Photosystem I reaction center subunit XII, found in Prochlorococcus marinus subsp. pastoris (strain CCMP1986 / NIES-2087 / MED4).